We begin with the raw amino-acid sequence, 265 residues long: 4-hydroxy-tetrahydrodipicolinate reductase (265 aa).

NAD(+) is bound by residues 7–12 (GASGRM), aspartate 33, 96–98 (GTT), and 120–123 (AANM). Histidine 153 acts as the Proton donor/acceptor in catalysis. Histidine 154 is a (S)-2,3,4,5-tetrahydrodipicolinate binding site. Catalysis depends on lysine 157, which acts as the Proton donor. 163-164 (GT) is a binding site for (S)-2,3,4,5-tetrahydrodipicolinate.

The protein belongs to the DapB family.

It is found in the cytoplasm. The catalysed reaction is (S)-2,3,4,5-tetrahydrodipicolinate + NAD(+) + H2O = (2S,4S)-4-hydroxy-2,3,4,5-tetrahydrodipicolinate + NADH + H(+). It catalyses the reaction (S)-2,3,4,5-tetrahydrodipicolinate + NADP(+) + H2O = (2S,4S)-4-hydroxy-2,3,4,5-tetrahydrodipicolinate + NADPH + H(+). The protein operates within amino-acid biosynthesis; L-lysine biosynthesis via DAP pathway; (S)-tetrahydrodipicolinate from L-aspartate: step 4/4. Functionally, catalyzes the conversion of 4-hydroxy-tetrahydrodipicolinate (HTPA) to tetrahydrodipicolinate. The chain is 4-hydroxy-tetrahydrodipicolinate reductase from Cupriavidus pinatubonensis (strain JMP 134 / LMG 1197) (Cupriavidus necator (strain JMP 134)).